The following is a 149-amino-acid chain: 18 kDa antigen 1 (149 aa).

Residues 21-131 form the sHSP domain; that stretch reads TAARPAVMPM…KPRKIAVGRG (111 aa).

This sequence belongs to the small heat shock protein (HSP20) family.

In terms of biological role, not known. This protein is one of the major immune reactive proteins in mycobacteria. The polypeptide is 18 kDa antigen 1 (Mycobacterium intracellulare).